A 699-amino-acid chain; its full sequence is Conditioned medium factor (699 aa).

The N-terminal stretch at 1 to 18 (MRLLLLLILIITINFSYG) is a signal peptide. N-linked (GlcNAc...) asparagine glycans are attached at residues Asn130, Asn283, Asn346, and Asn430. The disordered stretch occupies residues 680–699 (SPQQTTNTEYNKEMSSNSVW).

N- and O-glycosylated. In terms of processing, the N-terminus is blocked.

Involved in cell density sensing and might synchronize the onset of development by triggering aggregation when a majority of the cells in a given area have starved. This is Conditioned medium factor (cmfA) from Dictyostelium discoideum (Social amoeba).